The sequence spans 592 residues: Membrane protein insertase YidC (592 aa).

Helical transmembrane passes span 8–28 (LFIALGLILVILTGYQMFVMG), 363–385 (ALGQFGLAILALTLMVKIVMFPL), 430–450 (INPLAGCLPILPQIPIFFALY), 493–513 (IWLIGGVLGIGAWPIIMGLTM), and 531–551 (IFAFLPIVFTFILAPFAAGLV).

Belongs to the OXA1/ALB3/YidC family. Type 1 subfamily. Interacts with the Sec translocase complex via SecD. Specifically interacts with transmembrane segments of nascent integral membrane proteins during membrane integration.

The protein localises to the cell inner membrane. Its function is as follows. Required for the insertion and/or proper folding and/or complex formation of integral membrane proteins into the membrane. Involved in integration of membrane proteins that insert both dependently and independently of the Sec translocase complex, as well as at least some lipoproteins. Aids folding of multispanning membrane proteins. The chain is Membrane protein insertase YidC from Maricaulis maris (strain MCS10) (Caulobacter maris).